A 449-amino-acid polypeptide reads, in one-letter code: Probable glycosyltransferase 5 (449 aa).

A compositionally biased stretch (basic and acidic residues) spans 1-14 (MMEKHGGKVTSDRR). Positions 1 to 24 (MMEKHGGKVTSDRRAGRRQHGQRC) are disordered. The Cytoplasmic segment spans residues 1 to 28 (MMEKHGGKVTSDRRAGRRQHGQRCSASD). Residues 29–49 (AAPLVVVVILIVAALFLILGP) form a helical; Signal-anchor for type II membrane protein membrane-spanning segment. The Lumenal segment spans residues 50–449 (TGSSSFTVPR…HPTFRAARPT (400 aa)). The disordered stretch occupies residues 74-109 (APPPPPPPAQMQAGANASSEEDSGLPPPRQLTDPPY). Asparagine 89, asparagine 413, and asparagine 422 each carry an N-linked (GlcNAc...) asparagine glycan.

The protein belongs to the glycosyltransferase 34 family.

The protein localises to the golgi apparatus membrane. Its function is as follows. Probable glycosyltransferase that may be involved in the biosynthesis of xyloglucan. The protein is Probable glycosyltransferase 5 of Oryza sativa subsp. japonica (Rice).